Here is a 281-residue protein sequence, read N- to C-terminus: Probable endonuclease 4 (281 aa).

His-69, His-109, Glu-145, Asp-179, His-182, His-216, Asp-229, His-231, and Glu-261 together coordinate Zn(2+).

This sequence belongs to the AP endonuclease 2 family. The cofactor is Zn(2+).

The enzyme catalyses Endonucleolytic cleavage to 5'-phosphooligonucleotide end-products.. Endonuclease IV plays a role in DNA repair. It cleaves phosphodiester bonds at apurinic or apyrimidinic (AP) sites, generating a 3'-hydroxyl group and a 5'-terminal sugar phosphate. The polypeptide is Probable endonuclease 4 (Parabacteroides distasonis (strain ATCC 8503 / DSM 20701 / CIP 104284 / JCM 5825 / NCTC 11152)).